Consider the following 396-residue polypeptide: 8-amino-7-oxononanoate synthase (396 aa).

Arginine 29 serves as a coordination point for substrate. 116–117 (GY) serves as a coordination point for pyridoxal 5'-phosphate. Substrate is bound at residue histidine 141. Pyridoxal 5'-phosphate-binding residues include serine 187, histidine 215, and threonine 243. Residue lysine 246 is modified to N6-(pyridoxal phosphate)lysine. Threonine 360 contacts substrate.

The protein belongs to the class-II pyridoxal-phosphate-dependent aminotransferase family. BioF subfamily. Homodimer. The cofactor is pyridoxal 5'-phosphate.

The enzyme catalyses 6-carboxyhexanoyl-[ACP] + L-alanine + H(+) = (8S)-8-amino-7-oxononanoate + holo-[ACP] + CO2. It participates in cofactor biosynthesis; biotin biosynthesis. Functionally, catalyzes the decarboxylative condensation of pimeloyl-[acyl-carrier protein] and L-alanine to produce 8-amino-7-oxononanoate (AON), [acyl-carrier protein], and carbon dioxide. In Nitrosospira multiformis (strain ATCC 25196 / NCIMB 11849 / C 71), this protein is 8-amino-7-oxononanoate synthase.